The sequence spans 694 residues: Putative L-type lectin-domain containing receptor kinase II.2 (694 aa).

The first 24 residues, 1–24 (MAGVLRSLRFWMIICVQVLSLVLA), serve as a signal peptide directing secretion. At 25–318 (QDRDEFVYHD…PTSRSKDSKN (294 aa)) the chain is on the extracellular side. Residues 27–272 (RDEFVYHDFS…DQYILGWSFK (246 aa)) are legume-lectin like. 10 N-linked (GlcNAc...) asparagine glycosylation sites follow: asparagine 57, asparagine 58, asparagine 73, asparagine 131, asparagine 172, asparagine 183, asparagine 201, asparagine 208, asparagine 240, and asparagine 246. The interval 283–314 (SKILDPPNRPPPPSSPPPPPPPPPTPPTSRSK) is disordered. A compositionally biased stretch (pro residues) spans 289–309 (PNRPPPPSSPPPPPPPPPTPP). The chain crosses the membrane as a helical span at residues 319–339 (IIIICVTVTSIAFLLMLGGFL). At 340 to 694 (YLYKKKKYAE…EDVTILFGGR (355 aa)) the chain is on the cytoplasmic side. A Protein kinase domain is found at 375–650 (FRENRLLGAG…IQYLEGNATI (276 aa)). Residues 381–389 (LGAGGFGKV) and lysine 403 contribute to the ATP site. The Proton acceptor role is filled by aspartate 500.

This sequence in the C-terminal section; belongs to the protein kinase superfamily. Ser/Thr protein kinase family. The protein in the N-terminal section; belongs to the leguminous lectin family.

The protein resides in the cell membrane. It catalyses the reaction L-seryl-[protein] + ATP = O-phospho-L-seryl-[protein] + ADP + H(+). The enzyme catalyses L-threonyl-[protein] + ATP = O-phospho-L-threonyl-[protein] + ADP + H(+). This is Putative L-type lectin-domain containing receptor kinase II.2 (LECRK22) from Arabidopsis thaliana (Mouse-ear cress).